We begin with the raw amino-acid sequence, 264 residues long: Small ribosomal subunit protein uS3 (264 aa).

The KH type-2 domain occupies 39–107 (VREYLKKKLK…PVHVNIEEIR (69 aa)). The segment at 217–264 (EEVAEEKRPRRNARPGDRRPRRDGEGAPAGARRGAPRRGGAGDGKTGE) is disordered. Over residues 230 to 241 (RPGDRRPRRDGE) the composition is skewed to basic and acidic residues. A compositionally biased stretch (gly residues) spans 253 to 264 (RRGGAGDGKTGE).

It belongs to the universal ribosomal protein uS3 family. In terms of assembly, part of the 30S ribosomal subunit. Forms a tight complex with proteins S10 and S14.

In terms of biological role, binds the lower part of the 30S subunit head. Binds mRNA in the 70S ribosome, positioning it for translation. In Paraburkholderia phymatum (strain DSM 17167 / CIP 108236 / LMG 21445 / STM815) (Burkholderia phymatum), this protein is Small ribosomal subunit protein uS3.